Consider the following 845-residue polypeptide: uncharacterized protein (845 aa).

The segment covering 224–241 (SNNIPTGIQDSSKYTVNG) has biased composition (polar residues). Disordered stretches follow at residues 224–244 (SNNIPTGIQDSSKYTVNGPTE), 324–346 (QGTESISFASKNNSAPSADANNG), 383–434 (RTAN…EGSA), 456–485 (VKASNISTEKSKTIAKPKPAKELSPQATLN), 519–619 (NMTL…PKNS), 674–701 (VVSRTVTSPKSGAYASPSKASYNQDSSP), and 739–785 (RKST…ANKS). A compositionally biased stretch (basic and acidic residues) spans 390–399 (PTKKSNRSEQ). A compositionally biased stretch (polar residues) spans 400–422 (SKTVANTNVGSKNGTTPRSFAQK). The span at 534–546 (NSWRSKYLSEGKN) shows a compositional bias: basic and acidic residues. Residues 563–576 (SSLASPTKSSASPL) show a composition bias toward low complexity. Ser567 bears the Phosphoserine mark. Composition is skewed to basic and acidic residues over residues 579 to 588 (APKETPERLC) and 600 to 614 (ANLKESELPKEKSDI). Composition is skewed to polar residues over residues 674 to 683 (VVSRTVTSPK), 691 to 701 (SKASYNQDSSP), and 743 to 760 (ADSLSSPKRQSVPSTPKA).

It is found in the mitochondrion. This is an uncharacterized protein from Schizosaccharomyces pombe (strain 972 / ATCC 24843) (Fission yeast).